The primary structure comprises 1184 residues: DNA-directed RNA polymerase subunit beta (1184 aa).

It belongs to the RNA polymerase beta chain family. In terms of assembly, the RNAP catalytic core consists of 2 alpha, 1 beta, 1 beta' and 1 omega subunit. When a sigma factor is associated with the core the holoenzyme is formed, which can initiate transcription.

The enzyme catalyses RNA(n) + a ribonucleoside 5'-triphosphate = RNA(n+1) + diphosphate. In terms of biological role, DNA-dependent RNA polymerase catalyzes the transcription of DNA into RNA using the four ribonucleoside triphosphates as substrates. The protein is DNA-directed RNA polymerase subunit beta of Fusobacterium nucleatum subsp. nucleatum (strain ATCC 25586 / DSM 15643 / BCRC 10681 / CIP 101130 / JCM 8532 / KCTC 2640 / LMG 13131 / VPI 4355).